We begin with the raw amino-acid sequence, 98 residues long: Integration host factor subunit alpha (98 aa).

This sequence belongs to the bacterial histone-like protein family. In terms of assembly, heterodimer of an alpha and a beta chain.

Its function is as follows. This protein is one of the two subunits of integration host factor, a specific DNA-binding protein that functions in genetic recombination as well as in transcriptional and translational control. The sequence is that of Integration host factor subunit alpha from Marinomonas sp. (strain MWYL1).